A 216-amino-acid polypeptide reads, in one-letter code: Transmembrane protein 186 (216 aa).

Residues 1-68 are Mitochondrial matrix-facing; that stretch reads MAFLLRVVPR…IYRFRAIRAI (68 aa). Residues 31-52 are disordered; the sequence is GDSKRWVGSRSPHSREKSPGTE. Residues 69–91 form a helical membrane-spanning segment; it reads GFLSRLKLAQTAVTVVALPPGFY. The Mitochondrial intermembrane portion of the chain corresponds to 92–103; sequence CYSQGLMTLSSL. The chain crosses the membrane as a helical span at residues 104–124; it reads CLLGGVASFALAMLCWMSHFF. Over 125-216 the chain is Mitochondrial matrix; that stretch reads RRLVGILYVN…GTLATLKNSK (92 aa).

Belongs to the TMEM186 family. As to quaternary structure, part of the mitochondrial complex I assembly/MCIA complex that comprises at least the core subunits TMEM126B, NDUFAF1, ECSIT and ACAD9 and complement subunits such as COA1 and TMEM186. Interacts with MT-ND3.

It localises to the mitochondrion inner membrane. In terms of biological role, as part of the MCIA complex, required for efficient assembly of the mitochondrial complex I. This is Transmembrane protein 186 from Mus musculus (Mouse).